The following is a 142-amino-acid chain: Large ribosomal subunit protein bL17 (142 aa).

This sequence belongs to the bacterial ribosomal protein bL17 family. Part of the 50S ribosomal subunit. Contacts protein L32.

This chain is Large ribosomal subunit protein bL17, found in Wolbachia pipientis subsp. Culex pipiens (strain wPip).